The chain runs to 161 residues: MSEASRVCSGYYSLNHSFVEPFQCPRRGEGATLLYCCGFADLKYCCSEPGSYFPYKHSYMWSLSIGALIGLGIAALVLLAFVISVCVLCYLFLYTKPQRLDTGLKLQHLEAVSTQEGNSNRKSKAPRSNAASNSTNETFYEADDIIQEKTMDTTQINTAYC.

The chain crosses the membrane as a helical span at residues Ile65 to Val85. Positions Gln115–Ser134 are disordered.

It belongs to the shisa family.

The protein localises to the membrane. The protein is Protein shisa-like-2B (SHISAL2B) of Bos taurus (Bovine).